We begin with the raw amino-acid sequence, 372 residues long: DNA-directed RNA polymerase subunit alpha (372 aa).

Residues 1 to 268 are alpha N-terminal domain (alpha-NTD); the sequence is MIFDEDSNSI…DQFQPFINFD (268 aa). The tract at residues 280-372 is alpha C-terminal domain (alpha-CTD); that stretch reads KDTLPYDSNL…ESLSKQYSEE (93 aa).

This sequence belongs to the RNA polymerase alpha chain family. As to quaternary structure, homodimer. The RNAP catalytic core consists of 2 alpha, 1 beta, 1 beta' and 1 omega subunit. When a sigma factor is associated with the core the holoenzyme is formed, which can initiate transcription.

The enzyme catalyses RNA(n) + a ribonucleoside 5'-triphosphate = RNA(n+1) + diphosphate. Its function is as follows. DNA-dependent RNA polymerase catalyzes the transcription of DNA into RNA using the four ribonucleoside triphosphates as substrates. The sequence is that of DNA-directed RNA polymerase subunit alpha from Ehrlichia chaffeensis (strain ATCC CRL-10679 / Arkansas).